A 148-amino-acid polypeptide reads, in one-letter code: NADPH-dependent 7-cyano-7-deazaguanine reductase (148 aa).

The Thioimide intermediate role is filled by Cys50. The active-site Proton donor is the Asp57. Residues 72 to 74 (VES) and 91 to 92 (HE) each bind substrate.

It belongs to the GTP cyclohydrolase I family. QueF type 1 subfamily.

It localises to the cytoplasm. The catalysed reaction is 7-aminomethyl-7-carbaguanine + 2 NADP(+) = 7-cyano-7-deazaguanine + 2 NADPH + 3 H(+). It functions in the pathway tRNA modification; tRNA-queuosine biosynthesis. In terms of biological role, catalyzes the NADPH-dependent reduction of 7-cyano-7-deazaguanine (preQ0) to 7-aminomethyl-7-deazaguanine (preQ1). The polypeptide is NADPH-dependent 7-cyano-7-deazaguanine reductase (Helicobacter pylori (strain G27)).